Consider the following 218-residue polypeptide: Non-structural protein NS3 (218 aa).

It belongs to the orbivirus NS3 family.

Functionally, may play a role in the release of virions from infected cells. The chain is Non-structural protein NS3 (Segment-10) from Camelus dromedarius (Dromedary).